A 479-amino-acid chain; its full sequence is Adenylate kinase 8 (479 aa).

Adenylate kinase stretches follow at residues 58–258 and 269–471; these read PRVV…TYVQ and PKVL…SGII. 67–72 is an ATP binding site; it reads ASGKTT. The segment at 87-113 is NMP 1; it reads TKENLLEREFSLLSLEAKKHYQVYKRV. AMP contacts are provided by residues 140-143, Gln147, and Arg203; that span reads GIPE. Residues 177-206 are LID 1; the sequence is GKRIDPVTGEIYHTTFDWPPELEIQNRLIQ. 278–283 is an ATP binding site; it reads GCGKKL. The interval 298–327 is NMP 2; the sequence is SCGQLLKEAMAAESSLGDLIEPFFEKRMTV. Residues 325–327, 354–357, and Gln361 contribute to the AMP site; these read MTV and GFPR. The interval 391 to 424 is LID 2; sequence LRRTDPVTGERFHLMYKPPPTIEVQARLLQNPKD. Arg392 lines the ATP pocket.

This sequence belongs to the adenylate kinase family. As to quaternary structure, interacts with CFAP45 and CFAP52; CFAP45 and AK8 dimerization may create a cavity at the interface of the dimer that can accommodate AMP.

Its subcellular location is the cytoplasm. The protein resides in the cytosol. It is found in the cytoskeleton. It localises to the cilium axoneme. It catalyses the reaction AMP + ATP = 2 ADP. The enzyme catalyses a 2'-deoxyribonucleoside 5'-diphosphate + ATP = a 2'-deoxyribonucleoside 5'-triphosphate + ADP. The catalysed reaction is a ribonucleoside 5'-diphosphate + ATP = a ribonucleoside 5'-triphosphate + ADP. In terms of biological role, nucleoside monophosphate (NMP) kinase that catalyzes the reversible transfer of the terminal phosphate group between nucleoside triphosphates and monophosphates. Has highest activity toward AMP, and weaker activity toward dAMP, CMP and dCMP. Also displays broad nucleoside diphosphate kinase activity. In Rattus norvegicus (Rat), this protein is Adenylate kinase 8 (Ak8).